Here is a 208-residue protein sequence, read N- to C-terminus: Uracil phosphoribosyltransferase (208 aa).

5-phospho-alpha-D-ribose 1-diphosphate is bound by residues Arg-78, Arg-103, and 130-138 (DPMLATGGS). Uracil-binding positions include Ile-193 and 198 to 200 (GDA). Residue Asp-199 coordinates 5-phospho-alpha-D-ribose 1-diphosphate.

It belongs to the UPRTase family. The cofactor is Mg(2+).

The enzyme catalyses UMP + diphosphate = 5-phospho-alpha-D-ribose 1-diphosphate + uracil. The protein operates within pyrimidine metabolism; UMP biosynthesis via salvage pathway; UMP from uracil: step 1/1. Its activity is regulated as follows. Allosterically activated by GTP. Functionally, catalyzes the conversion of uracil and 5-phospho-alpha-D-ribose 1-diphosphate (PRPP) to UMP and diphosphate. This Roseiflexus sp. (strain RS-1) protein is Uracil phosphoribosyltransferase.